The sequence spans 115 residues: Small ribosomal subunit protein bS18c (115 aa).

The tract at residues 91–115 (TNALKARTQNKDQKKEKFQINKKKK) is disordered. Positions 99 to 109 (QNKDQKKEKFQ) are enriched in basic and acidic residues.

It belongs to the bacterial ribosomal protein bS18 family. As to quaternary structure, part of the 30S ribosomal subunit.

Its subcellular location is the plastid. It localises to the chloroplast. The sequence is that of Small ribosomal subunit protein bS18c from Ipomoea purpurea (Common morning glory).